Reading from the N-terminus, the 97-residue chain is uncharacterized protein (97 aa).

This is an uncharacterized protein from Orgyia pseudotsugata multicapsid polyhedrosis virus (OpMNPV).